An 82-amino-acid chain; its full sequence is MALLNKLLCFALVFMIFGEFVTPDCYEDWSRCTPGTSFLTGILWKDCHSRCKELGHRGGRCVDSPSKHCPGVLKNNKQCHCY.

The first 23 residues, 1–23 (MALLNKLLCFALVFMIFGEFVTP), serve as a signal peptide directing secretion. Intrachain disulfides connect Cys25/Cys32, Cys47/Cys51, Cys61/Cys69, and Cys79/Cys81.

The protein belongs to the macin family.

Its subcellular location is the secreted. This chain is Neuromacin, found in Hirudo medicinalis (Medicinal leech).